We begin with the raw amino-acid sequence, 246 residues long: tRNA pseudouridine synthase A (246 aa).

The active-site Nucleophile is the D53. Substrate is bound at residue Y112.

This sequence belongs to the tRNA pseudouridine synthase TruA family. In terms of assembly, homodimer.

It carries out the reaction uridine(38/39/40) in tRNA = pseudouridine(38/39/40) in tRNA. Formation of pseudouridine at positions 38, 39 and 40 in the anticodon stem and loop of transfer RNAs. This chain is tRNA pseudouridine synthase A, found in Anaplasma phagocytophilum (strain HZ).